Consider the following 657-residue polypeptide: Broad substrate specificity ATP-binding cassette transporter ABCG2 (657 aa).

The segment at 1–25 (MSSSNDHVLVPMSQRNKNGLPGMSS) is disordered. Over 1–395 (MSSSNDHVLV…KNLLGNPQAS (395 aa)) the chain is Cytoplasmic. An ABC transporter domain is found at 48-285 (VKSGFLVRKT…FASAGYHCEP (238 aa)). ATP is bound by residues 79 to 86 (GPTGGGKS), 183 to 189 (RGISGGE), Glu210, and His242. The ABC transmembrane type-2 domain maps to 389 to 653 (LGNPQASVAQ…TIAYLKLLFL (265 aa)). The chain crosses the membrane as a helical span at residues 396-416 (VAQLIVTVILGLIIGALYFGL). Over 417-428 (KNDPTGMQNRAG) the chain is Extracellular. The chain crosses the membrane as a helical span at residues 429 to 449 (VFFFLTTNQCFTSVSAVELFV). Over 450–477 (VEKKLFIHEYISGYYRVSSYFFGKLVSD) the chain is Cytoplasmic. Residues 478 to 498 (LLPMRFLPSVIYTCILYFMLG) form a helical membrane-spanning segment. The Extracellular segment spans residues 499–506 (LKRTVEAF). A helical transmembrane segment spans residues 507-527 (FIMMFTLIMVAYTASSMALAI). Residues 528-535 (AAGQSVVS) lie on the Cytoplasmic side of the membrane. The chain crosses the membrane as a helical span at residues 536-556 (VATLLMTISFVFMMLFSGLLV). Residues 557–632 (NLRTIGPWLS…LSPWGLWRNH (76 aa)) are Extracellular-facing. A disulfide bridge connects residues Cys592 and Cys610. N-linked (GlcNAc...) asparagine glycans are attached at residues Asn596 and Asn600. The helical transmembrane segment at 633–653 (VALACMIIIFLTIAYLKLLFL) threads the bilayer. Residues 654-657 (KKYS) lie on the Cytoplasmic side of the membrane.

The protein belongs to the ABC transporter superfamily. ABCG family. Eye pigment precursor importer (TC 3.A.1.204) subfamily. As to quaternary structure, homodimer; disulfide-linked. The minimal functional unit is a homodimer, but the major oligomeric form in plasma membrane is a homotetramer with possibility of higher order oligomerization up to homododecamers. In terms of processing, N-glycosylated in brain capillary, kidney and small intestine but not in heart. Post-translationally, N-glycosylated. Glycosylation-deficient ABCG2 is normally expressed and functional. Phosphorylated. Phosphorylation may regulate the localization to the plasma membrane, the homooligomerization and therefore, the activity of the transporter. As to expression, highly expressed in brain capillary, kidney and small intestine. Lower expression in heart. Preferentially expressed (at protein level) on the luminal membrane of brain capillaries, in kidney and small intestine.

The protein localises to the cell membrane. It localises to the apical cell membrane. It is found in the mitochondrion membrane. The catalysed reaction is ATP + H2O + xenobioticSide 1 = ADP + phosphate + xenobioticSide 2.. It carries out the reaction urate(in) + ATP + H2O = urate(out) + ADP + phosphate + H(+). It catalyses the reaction indoxyl sulfate(in) + ATP + H2O = indoxyl sulfate(out) + ADP + phosphate + H(+). The enzyme catalyses sphing-4-enine 1-phosphate(in) + ATP + H2O = sphing-4-enine 1-phosphate(out) + ADP + phosphate + H(+). The catalysed reaction is estrone 3-sulfate(in) + ATP + H2O = estrone 3-sulfate(out) + ADP + phosphate + H(+). It carries out the reaction dehydroepiandrosterone 3-sulfate(in) + ATP + H2O = dehydroepiandrosterone 3-sulfate(out) + ADP + phosphate + H(+). It catalyses the reaction 4-methylumbelliferone sulfate(in) + ATP + H2O = 4-methylumbelliferone sulfate(out) + ADP + phosphate + H(+). The enzyme catalyses 5,7-dimethyl-2-methylamino-4-(3-pyridylmethyl)-1,3-benzothiazol-6-yl beta-D-glucuronate(in) + ATP + H2O = 5,7-dimethyl-2-methylamino-4-(3-pyridylmethyl)-1,3-benzothiazol-6-yl beta-D-glucuronate(out) + ADP + phosphate + H(+). The catalysed reaction is 4-methylumbelliferone beta-D-glucuronate(in) + ATP + H2O = 4-methylumbelliferone beta-D-glucuronate(out) + ADP + phosphate + H(+). It carries out the reaction 5,7-dimethyl-2-methylamino-4-(3-pyridylmethyl)-1,3-benzothiazol-6-yl sulfate(in) + ATP + H2O = 5,7-dimethyl-2-methylamino-4-(3-pyridylmethyl)-1,3-benzothiazol-6-yl sulfate(out) + ADP + phosphate + H(+). It catalyses the reaction 17beta-estradiol 17-O-(beta-D-glucuronate)(in) + ATP + H2O = 17beta-estradiol 17-O-(beta-D-glucuronate)(out) + ADP + phosphate + H(+). The enzyme catalyses methotrexate(in) + ATP + H2O = methotrexate(out) + ADP + phosphate + H(+). The catalysed reaction is riboflavin(in) + ATP + H2O = riboflavin(out) + ADP + phosphate + H(+). It carries out the reaction pheophorbide a(in) + ATP + H2O = pheophorbide a(out) + ADP + phosphate + H(+). It catalyses the reaction itaconate(in) + ATP + H2O = itaconate(out) + ADP + phosphate + H(+). In terms of biological role, broad substrate specificity ATP-dependent transporter of the ATP-binding cassette (ABC) family that actively extrudes a wide variety of physiological compounds, dietary toxins and xenobiotics from cells. Involved in porphyrin homeostasis, mediating the export of protoporphyrin IX (PPIX) from both mitochondria to cytosol and cytosol to extracellular space, it also functions in the cellular export of heme. Also mediates the efflux of sphingosine-1-P from cells. Acts as a urate exporter functioning in both renal and extrarenal urate excretion. In kidney, it also functions as a physiological exporter of the uremic toxin indoxyl sulfate. Also involved in the excretion of steroids like estrone 3-sulfate/E1S, 3beta-sulfooxy-androst-5-en-17-one/DHEAS, and other sulfate conjugates. Mediates the secretion of the riboflavin and biotin vitamins into milk. Extrudes pheophorbide a, a phototoxic porphyrin catabolite of chlorophyll, reducing its bioavailability. Plays an important role in the exclusion of xenobiotics from the brain. It confers to cells a resistance to multiple drugs and other xenobiotics including mitoxantrone, pheophorbide, camptothecin, methotrexate, azidothymidine, and the anthracyclines daunorubicin and doxorubicin, through the control of their efflux. In placenta, it limits the penetration of drugs from the maternal plasma into the fetus. May play a role in early stem cell self-renewal by blocking differentiation. In inflammatory macrophages, exports itaconate from the cytosol to the extracellular compartment and limits the activation of TFEB-dependent lysosome biogenesis involved in antibacterial innate immune response. This Rattus norvegicus (Rat) protein is Broad substrate specificity ATP-binding cassette transporter ABCG2 (Abcg2).